The sequence spans 298 residues: Ethanolamine ammonia-lyase small subunit (298 aa).

The interval 1 to 19 (MDQKQIEEIVRSVMASMGQ) is targets protein to the BMC. Adenosylcob(III)alamin is bound by residues V210, E231, and C261.

It belongs to the EutC family. In terms of assembly, the basic unit is a heterodimer which dimerizes to form tetramers. The heterotetramers trimerize; 6 large subunits form a core ring with 6 small subunits projecting outwards. Interacts with EutS, which targets it to the interior of the BMC. Adenosylcob(III)alamin serves as cofactor.

The protein localises to the bacterial microcompartment. The catalysed reaction is ethanolamine = acetaldehyde + NH4(+). It functions in the pathway amine and polyamine degradation; ethanolamine degradation. Catalyzes the deamination of various vicinal amino-alcohols to oxo compounds. It is spontaneously inactivated by its substrate and reactivated by EutA. May play a role in bacterial microcompartment (BMC) assembly or maintenance. Directly targeted to the BMC. Its function is as follows. Expression of the eut operon allows this bacteria to use ethanolamine (EA) as a carbon, nitrogen and energy source. It relies on cobalamin (vitamin B12) both as a cofactor for the ethanolamine ammonia-lyase activity and to induce the operon. EA enhances bacterial survival in macrophages in a concentration-dependent manner, suggesting it is an important nutrient during infection. The chain is Ethanolamine ammonia-lyase small subunit from Salmonella typhimurium (strain LT2 / SGSC1412 / ATCC 700720).